A 251-amino-acid polypeptide reads, in one-letter code: Pyruvate formate-lyase-activating enzyme (251 aa).

The 230-residue stretch at 15–244 (VDGPGLRYIL…KAAYRYVNFK (230 aa)) folds into the Radical SAM core domain. [4Fe-4S] cluster-binding residues include C29, C33, and C36. S-adenosyl-L-methionine-binding positions include 35–37 (YCH), G79, 134–136 (DIK), and H207.

It belongs to the organic radical-activating enzymes family. [4Fe-4S] cluster is required as a cofactor.

It is found in the cytoplasm. The enzyme catalyses glycyl-[formate C-acetyltransferase] + reduced [flavodoxin] + S-adenosyl-L-methionine = glycin-2-yl radical-[formate C-acetyltransferase] + semiquinone [flavodoxin] + 5'-deoxyadenosine + L-methionine + H(+). In terms of biological role, activation of pyruvate formate-lyase under anaerobic conditions by generation of an organic free radical, using S-adenosylmethionine and reduced flavodoxin as cosubstrates to produce 5'-deoxy-adenosine. The chain is Pyruvate formate-lyase-activating enzyme (pflA) from Staphylococcus aureus (strain N315).